Consider the following 688-residue polypeptide: Polyphosphate kinase (688 aa).

Asn-45 lines the ATP pocket. Residues Arg-375 and Arg-405 each coordinate Mg(2+). The PLD phosphodiesterase domain occupies 430-464 (PGLKIHAKLFLISRKENGEVVRYAHIGTGNFNEKT). His-435 acts as the Phosphohistidine intermediate in catalysis. ATP-binding residues include Tyr-468, Arg-564, and His-592.

It belongs to the polyphosphate kinase 1 (PPK1) family. The cofactor is Mg(2+). An intermediate of this reaction is the autophosphorylated ppk in which a phosphate is covalently linked to a histidine residue through a N-P bond.

The catalysed reaction is [phosphate](n) + ATP = [phosphate](n+1) + ADP. Functionally, catalyzes the reversible transfer of the terminal phosphate of ATP to form a long-chain polyphosphate (polyP). The protein is Polyphosphate kinase of Escherichia coli O6:H1 (strain CFT073 / ATCC 700928 / UPEC).